A 105-amino-acid polypeptide reads, in one-letter code: MNREEMTLLGFEIVAYAGDARSKLLEALKAAENGDFAKADSLVVEAGSCIAEAHSSQTGMLAREASGEELPYSVTMMHGQDHLMTTILLKDVIHHLIELYKRGAK.

The 99-residue stretch at 4–102 (EEMTLLGFEI…IHHLIELYKR (99 aa)) folds into the PTS EIIA type-3 domain. His-78 serves as the catalytic Tele-phosphohistidine intermediate. The residue at position 78 (His-78) is a Phosphohistidine; by HPr. Position 81 (Asp-81) interacts with Mg(2+).

In terms of assembly, homotrimer. Mg(2+) serves as cofactor.

The protein localises to the cytoplasm. Functionally, the phosphoenolpyruvate-dependent sugar phosphotransferase system (sugar PTS), a major carbohydrate active transport system, catalyzes the phosphorylation of incoming sugar substrates concomitantly with their translocation across the cell membrane. The enzyme II LacEF PTS system is involved in lactose transport. The chain is PTS system lactose-specific EIIA component from Lactococcus lactis subsp. lactis (Streptococcus lactis).